The sequence spans 72 residues: Protein kish-A (72 aa).

The signal sequence occupies residues 1 to 26 (MSAIFNFQSLLIVILLLICTCAYLRA). Residues 27–53 (LVPNLLDKNKTGILGIFWKCARIGERK) are Extracellular-facing. A glycan (N-linked (GlcNAc...) asparagine) is linked at Asn35. Residues 54 to 71 (SPYVAVCCVVMAFSILFM) traverse the membrane as a helical segment. Residue Gln72 is a topological domain, cytoplasmic.

It belongs to the KISH family.

The protein localises to the golgi apparatus membrane. Functionally, involved in the early part of the secretory pathway. In Xenopus tropicalis (Western clawed frog), this protein is Protein kish-A (tmem167a).